A 58-amino-acid polypeptide reads, in one-letter code: Small ribosomal subunit protein bS21 (58 aa).

The protein belongs to the bacterial ribosomal protein bS21 family.

This chain is Small ribosomal subunit protein bS21, found in Lactobacillus johnsonii (strain CNCM I-12250 / La1 / NCC 533).